The chain runs to 1288 residues: VWFA and cache domain-containing protein 1 (1288 aa).

An N-terminal signal peptide occupies residues 1–49 (MAREPEEEETVRPAAVVRRCPRCPGWPGAPRPPLWLLCLVACWILGAVA). The Extracellular segment spans residues 50 to 1109 (DADFSILDEA…ITLNMIKSAP (1060 aa)). N-linked (GlcNAc...) asparagine glycosylation is present at Asn-159. One can recognise a VWFA domain in the interval 242-457 (HIVVILDHGA…TTVGRFYTNL (216 aa)). 2 Cache domains span residues 467 to 546 (FSLP…SEPP) and 786 to 867 (LTGP…HPTL). A helical transmembrane segment spans residues 1110 to 1130 (VGPVAGGIMGCIMVLVLAVYA). Topologically, residues 1131-1288 (YRHQIHRRSH…VTVHTVDAEC (158 aa)) are cytoplasmic. 2 disordered regions span residues 1157–1176 (NLENDRDERDDDSHEDRGII) and 1187–1237 (ERHV…VDVG). Residues 1159-1174 (ENDRDERDDDSHEDRG) show a composition bias toward basic and acidic residues. Residues 1210–1229 (GYSTMSPQEDSENPPCNNDP) are compositionally biased toward polar residues.

Belongs to the calcium channel subunit alpha-2/delta family.

Its subcellular location is the membrane. May regulate voltage-dependent calcium channels. The chain is VWFA and cache domain-containing protein 1 (Cachd1) from Mus musculus (Mouse).